A 294-amino-acid polypeptide reads, in one-letter code: 33 kDa chaperonin (294 aa).

Cystine bridges form between Cys235–Cys237 and Cys268–Cys271.

It belongs to the HSP33 family. Post-translationally, under oxidizing conditions two disulfide bonds are formed involving the reactive cysteines. Under reducing conditions zinc is bound to the reactive cysteines and the protein is inactive.

It is found in the cytoplasm. In terms of biological role, redox regulated molecular chaperone. Protects both thermally unfolding and oxidatively damaged proteins from irreversible aggregation. Plays an important role in the bacterial defense system toward oxidative stress. In Proteus mirabilis (strain HI4320), this protein is 33 kDa chaperonin.